We begin with the raw amino-acid sequence, 511 residues long: Mesoderm induction early response protein 1 (511 aa).

Low complexity predominate over residues 1-16 (MAEPSVESSSPGGSAT). The segment at 1 to 171 (MAEPSVESSS…EEESEEDEDY (171 aa)) is disordered. At Ser10 the chain carries Phosphoserine. Positions 17–36 (SEDHEFDPSADMLVHDFDDE) are enriched in basic and acidic residues. Residues 37-46 (RTLEEEEMME) show a composition bias toward acidic residues. Over residues 57–66 (DLAREGDMPI) the composition is skewed to basic and acidic residues. Over residues 83–104 (EEEEEEEEEEEGEDDEDADNDD) the composition is skewed to acidic residues. Polar residues predominate over residues 128–143 (QSSNDDPSQSVTSQDA). Ser140 carries the post-translational modification Phosphoserine. Position 154 is a phosphotyrosine (Tyr154). Phosphoserine is present on residues Ser159 and Ser165. A compositionally biased stretch (acidic residues) spans 159–171 (SEIEEESEEDEDY). The 99-residue stretch at 179–277 (KEIMVGSMFQ…EALRRLRFNV (99 aa)) folds into the ELM2 domain. Lys238 is covalently cross-linked (Glycyl lysine isopeptide (Lys-Gly) (interchain with G-Cter in SUMO2)). An SANT domain is found at 282–334 (EELSVWTEEECRNFEQGLKAYGKDFHLIQANKVRTRSVGECVAFYYMWKKSER). The tract at residues 365 to 511 (ESESAASSRA…KFEEHENTND (147 aa)) is disordered. 3 positions are modified to phosphoserine: Ser366, Ser368, and Ser376. The span at 397–408 (SSRNQNGVSSNG) shows a compositional bias: polar residues. Basic and acidic residues-rich tracts occupy residues 413–422 (LNKEEVKVEG) and 461–474 (ARNE…NERP). Lys419 participates in a covalent cross-link: Glycyl lysine isopeptide (Lys-Gly) (interchain with G-Cter in SUMO2). A compositionally biased stretch (polar residues) spans 481 to 493 (NSSGKESPGSSEF). Ser482, Ser487, and Ser490 each carry phosphoserine. Residues 499 to 511 (SHGKFEEHENTND) show a composition bias toward basic and acidic residues.

As to quaternary structure, interacts with HDAC1. Part of a complex containing at least CDYL, MIER1, MIER2, HDAC1 and HDAC2. As to expression, ubiquitously expressed. Isoform 1 is only expressed in testis.

The protein localises to the nucleus. In terms of biological role, transcriptional repressor regulating the expression of a number of genes including SP1 target genes. Probably functions through recruitment of HDAC1 a histone deacetylase involved in chromatin silencing. This chain is Mesoderm induction early response protein 1 (Mier1), found in Mus musculus (Mouse).